The chain runs to 124 residues: Large ribosomal subunit protein bL12 (124 aa).

The protein belongs to the bacterial ribosomal protein bL12 family. In terms of assembly, homodimer. Part of the ribosomal stalk of the 50S ribosomal subunit. Forms a multimeric L10(L12)X complex, where L10 forms an elongated spine to which 2 to 4 L12 dimers bind in a sequential fashion. Binds GTP-bound translation factors.

In terms of biological role, forms part of the ribosomal stalk which helps the ribosome interact with GTP-bound translation factors. Is thus essential for accurate translation. This chain is Large ribosomal subunit protein bL12, found in Idiomarina loihiensis (strain ATCC BAA-735 / DSM 15497 / L2-TR).